A 113-amino-acid polypeptide reads, in one-letter code: Nucleoid-associated protein Csac_1593 (113 aa).

It belongs to the YbaB/EbfC family. Homodimer.

It is found in the cytoplasm. It localises to the nucleoid. Binds to DNA and alters its conformation. May be involved in regulation of gene expression, nucleoid organization and DNA protection. In Caldicellulosiruptor saccharolyticus (strain ATCC 43494 / DSM 8903 / Tp8T 6331), this protein is Nucleoid-associated protein Csac_1593.